Reading from the N-terminus, the 117-residue chain is Iron-sulfur cluster insertion protein ErpA (117 aa).

3 residues coordinate iron-sulfur cluster: C45, C109, and C111.

The protein belongs to the HesB/IscA family. As to quaternary structure, homodimer. Requires iron-sulfur cluster as cofactor.

Its function is as follows. Required for insertion of 4Fe-4S clusters for at least IspG. This is Iron-sulfur cluster insertion protein ErpA from Hahella chejuensis (strain KCTC 2396).